An 817-amino-acid polypeptide reads, in one-letter code: Myosin-A (817 aa).

Ser19 bears the Phosphoserine mark. The 675-residue stretch at 97–771 (MSFGDIGLLN…GAKMLSKIQR (675 aa)) folds into the Myosin motor domain. Position 191–198 (191–198 (GESGAGKT)) interacts with ATP. Positions 661 to 671 (PHFIRCIKPNE) are actin-binding. A tail region spans residues 773–817 (KLVEWENCVSVIEAAIMKYKHKQNVENNVSSLMRVQAHIRKRMVA).

It belongs to the TRAFAC class myosin-kinesin ATPase superfamily. Myosin family. In terms of assembly, interacts with ACT1.

Its subcellular location is the cell membrane. Myosins are actin-based motor molecules with ATPase activity. Unconventional myosins serve in intracellular movements. Their highly divergent tails are presumed to bind to membranous compartments, which would be moved relative to actin filaments. The sequence is that of Myosin-A from Plasmodium yoelii yoelii.